Consider the following 684-residue polypeptide: Methionine--tRNA ligase (684 aa).

Positions 14–24 match the 'HIGH' region motif; sequence PYANGAIHLGH. Residues Cys-145, Cys-148, Cys-158, and Cys-161 each coordinate Zn(2+). The short motif at 330 to 334 is the 'KMSKS' region element; the sequence is KMSKS. Lys-333 contributes to the ATP binding site. In terms of domain architecture, tRNA-binding spans 582-684; that stretch reads DFAKLDLRVA…CGIRPGMQVK (103 aa).

This sequence belongs to the class-I aminoacyl-tRNA synthetase family. MetG type 1 subfamily. In terms of assembly, homodimer. It depends on Zn(2+) as a cofactor.

It is found in the cytoplasm. The catalysed reaction is tRNA(Met) + L-methionine + ATP = L-methionyl-tRNA(Met) + AMP + diphosphate. Functionally, is required not only for elongation of protein synthesis but also for the initiation of all mRNA translation through initiator tRNA(fMet) aminoacylation. The chain is Methionine--tRNA ligase from Haemophilus ducreyi (strain 35000HP / ATCC 700724).